The following is a 1237-amino-acid chain: Putative structural protein VP3 (1237 aa).

One can recognise a PPPDE domain in the interval Gly963 to Gln1178. Active-site residues include His1001 and Cys1149.

It localises to the virion. This chain is Putative structural protein VP3 (S3), found in Lymantria dispar cypovirus 1 (isolate Rao) (LdCPV-1).